The primary structure comprises 486 residues: Cardiolipin synthase A (486 aa).

Helical transmembrane passes span 3–23 (IFYD…IANI) and 38–58 (MSWL…WFFF). PLD phosphodiesterase domains follow at residues 219–246 (LDVR…VDPY) and 399–426 (KKGL…DMRS). Catalysis depends on residues His-224, Lys-226, Asp-231, His-404, Lys-406, and Asp-411.

This sequence belongs to the phospholipase D family. Cardiolipin synthase subfamily. ClsA sub-subfamily.

Its subcellular location is the cell inner membrane. The enzyme catalyses 2 a 1,2-diacyl-sn-glycero-3-phospho-(1'-sn-glycerol) = a cardiolipin + glycerol. In terms of biological role, catalyzes the reversible phosphatidyl group transfer from one phosphatidylglycerol molecule to another to form cardiolipin (CL) (diphosphatidylglycerol) and glycerol. The sequence is that of Cardiolipin synthase A from Buchnera aphidicola subsp. Schizaphis graminum (strain Sg).